A 143-amino-acid polypeptide reads, in one-letter code: Antiholin-like protein LrgA (143 aa).

The next 4 membrane-spanning stretches (helical) occupy residues 6–26 (VYSFLSQAFIFSAIMLISNII), 30–50 (LPIPMPSSVIGLVILFSLLCL), 61–81 (LGTALTGIIGFLFVPSGISVI), and 97–117 (VIVVATVILLAVTGLFAQFIL).

This sequence belongs to the CidA/LrgA family. LrgA subfamily.

The protein localises to the cell membrane. Its function is as follows. Inhibits the expression or activity of extracellular murein hydrolases by interacting, possibly with LrgB, with the holin-like protein CidA. The LrgAB and CidA proteins may affect the proton motive force of the membrane. May be involved in programmed cell death (PCD), possibly triggering PCD in response to antibiotics and environmental stresses. This chain is Antiholin-like protein LrgA, found in Bacillus anthracis (strain A0248).